The primary structure comprises 639 residues: Chaperone protein HtpG (639 aa).

An a; substrate-binding region spans residues 1–343; the sequence is MEATATKEHL…SNDLPLNVSR (343 aa). Positions 344 to 564 are b; sequence EILQESKDIE…THDMSGNLER (221 aa). Residues 565-639 are c; it reads LLKSAGQKVT…QLFLSTGSKE (75 aa).

This sequence belongs to the heat shock protein 90 family. As to quaternary structure, homodimer.

It is found in the cytoplasm. Its function is as follows. Molecular chaperone. Has ATPase activity. The sequence is that of Chaperone protein HtpG from Nitrosospira multiformis (strain ATCC 25196 / NCIMB 11849 / C 71).